The following is a 412-amino-acid chain: Acyl-[acyl-carrier-protein] hydrolase FATB3, chloroplastic (412 aa).

Over residues 1 to 25 (MVAAAASSAFFSFPTPGTSPKPGKF) the composition is skewed to low complexity. Residues 1–50 (MVAAAASSAFFSFPTPGTSPKPGKFGNWPSSLSIPFNPKSNHNGGIQVKA) constitute a chloroplast transit peptide. A disordered region spans residues 1–63 (MVAAAASSAF…AHPKANGSAV (63 aa)). The segment covering 28-44 (WPSSLSIPFNPKSNHNG) has biased composition (polar residues). Active-site residues include Asn-310, His-312, and Cys-347. The segment at 393-412 (NAGATGAVSTGKTSNGNSVS) is disordered. The segment covering 399-412 (AVSTGKTSNGNSVS) has biased composition (polar residues).

Belongs to the acyl-ACP thioesterase family.

It is found in the plastid. The protein localises to the chloroplast. The catalysed reaction is tetradecanoyl-[ACP] + H2O = tetradecanoate + holo-[ACP] + H(+). In terms of biological role, plays an essential role in chain termination during de novo fatty acid synthesis. Possesses thioesterase activity for medium chain acyl-ACPs. Main substrate is 14:0. The sequence is that of Acyl-[acyl-carrier-protein] hydrolase FATB3, chloroplastic from Cuphea viscosissima (Blue waxweed).